The following is a 41-amino-acid chain: Replication-associated protein (41 aa).

Functionally, involved in viral RNA replication. This Potato leafroll virus (strain Potato/Scotland/strain 1/1984) (PLrV) protein is Replication-associated protein.